We begin with the raw amino-acid sequence, 207 residues long: Large ribosomal subunit protein uL4 (207 aa).

Residues 62 to 85 (KKPFKQKGTGQARQGCRRAPQYPG) are disordered.

Belongs to the universal ribosomal protein uL4 family. As to quaternary structure, part of the 50S ribosomal subunit.

One of the primary rRNA binding proteins, this protein initially binds near the 5'-end of the 23S rRNA. It is important during the early stages of 50S assembly. It makes multiple contacts with different domains of the 23S rRNA in the assembled 50S subunit and ribosome. Its function is as follows. Forms part of the polypeptide exit tunnel. The polypeptide is Large ribosomal subunit protein uL4 (Geobacter sp. (strain M21)).